A 1088-amino-acid polypeptide reads, in one-letter code: DNA damage-binding protein 1b (1088 aa).

The protein belongs to the DDB1 family. Interacts with DDA1. Binds to KTN80.2/DWA3. Interacts with HTD1.

It is found in the nucleus. It participates in protein modification; protein ubiquitination. In terms of biological role, component of light signal transduction machinery. Involved in repression of photomorphogenesis in darkness. Plays a role in DNA repair by forming with DDB2 the UV-damaged DNA-binding protein complex (UV-DDB). In Arabidopsis thaliana (Mouse-ear cress), this protein is DNA damage-binding protein 1b.